The following is a 518-amino-acid chain: Putative beta-xylosidase (518 aa).

The active-site Proton acceptor is the Asp47. Glu203 functions as the Proton donor in the catalytic mechanism.

This sequence belongs to the glycosyl hydrolase 43 family.

The catalysed reaction is Hydrolysis of (1-&gt;4)-beta-D-xylans, to remove successive D-xylose residues from the non-reducing termini.. In Xylanibacter ruminicola (Prevotella ruminicola), this protein is Putative beta-xylosidase.